The primary structure comprises 376 residues: Glycerol-3-phosphate acyltransferase 9 (376 aa).

Over Met-1–Asn-78 the chain is Cytoplasmic. Position 13 is a phosphoserine (Ser-13). Helical transmembrane passes span Ile-79–Leu-99, Phe-102–Leu-122, and Val-135–His-155. The Cytoplasmic segment spans residues Gly-156–Lys-376. The tract at residues Val-168–Leu-180 is catalytic. Positions His-171 to Asp-176 match the HXXXXD motif motif. Position 209–218 (Gly-209–Ala-218) interacts with sn-glycerol 3-phosphate. The tract at residues Ile-242–Phe-262 is glycerol-3-phosphate binding. Residues Cys-266 to Tyr-275 are catalytic. The endoplasmic reticulum targeting stretch occupies residues Ile-369 to Leu-373.

It belongs to the 1-acyl-sn-glycerol-3-phosphate acyltransferase family. As to quaternary structure, self-interacts. Interacts with LPAT2 and LPCAT2. As to expression, up-regulated during embryogenesis. Expressed in seedlings, leaves, stems, roots, floral buds, flowers, pollen, and siliques at various developmental stages.

Its subcellular location is the endoplasmic reticulum membrane. The enzyme catalyses sn-glycerol 3-phosphate + an acyl-CoA = a 1-acyl-sn-glycero-3-phosphate + CoA. It functions in the pathway glycerolipid metabolism; triacylglycerol biosynthesis. Essential protein. Required for male and female gametophytes development. Exhibits sn-1 acyltransferase activity with high specificity for acyl-coenzyme A, thus triggering storage lipid biosynthesis and playing an important role in the Kennedy pathway of glycerolipid biosynthesis. Catalyzes triacylglycerol (TAG) accumulation involved in membrane lipid and oil biosynthesis, especially in seeds. Also contributes to the biosynthesis of both polar lipids and TAG in developing leaves, as well as lipid droplet production in developing pollen grains. Seems to not contribute to surface lipid biosynthesis (e.g. waxes and cutin). The sequence is that of Glycerol-3-phosphate acyltransferase 9 from Arabidopsis thaliana (Mouse-ear cress).